A 99-amino-acid chain; its full sequence is UPF0213 protein SP_1535 (99 aa).

The region spanning 3–78 (HKAYMYVLEC…KRKKRPQKEE (76 aa)) is the GIY-YIG domain.

It belongs to the UPF0213 family.

The chain is UPF0213 protein SP_1535 from Streptococcus pneumoniae serotype 4 (strain ATCC BAA-334 / TIGR4).